We begin with the raw amino-acid sequence, 303 residues long: Oxygen-dependent coproporphyrinogen-III oxidase (303 aa).

Residue serine 93 coordinates substrate. A divalent metal cation is bound by residues histidine 97 and histidine 107. Catalysis depends on histidine 107, which acts as the Proton donor. 109–111 (NVR) serves as a coordination point for substrate. A divalent metal cation contacts are provided by histidine 146 and histidine 176. Residues 241 to 276 (YVEFNLVYDRGTLFGLQSGGRTESILMSLPPQVRWG) form an important for dimerization region. Substrate is bound at residue 259-261 (GGR).

It belongs to the aerobic coproporphyrinogen-III oxidase family. As to quaternary structure, homodimer. The cofactor is a divalent metal cation.

Its subcellular location is the cytoplasm. The catalysed reaction is coproporphyrinogen III + O2 + 2 H(+) = protoporphyrinogen IX + 2 CO2 + 2 H2O. Its pathway is porphyrin-containing compound metabolism; protoporphyrin-IX biosynthesis; protoporphyrinogen-IX from coproporphyrinogen-III (O2 route): step 1/1. Its function is as follows. Involved in the heme biosynthesis. Catalyzes the aerobic oxidative decarboxylation of propionate groups of rings A and B of coproporphyrinogen-III to yield the vinyl groups in protoporphyrinogen-IX. This is Oxygen-dependent coproporphyrinogen-III oxidase from Pseudomonas putida (strain ATCC 700007 / DSM 6899 / JCM 31910 / BCRC 17059 / LMG 24140 / F1).